Reading from the N-terminus, the 608-residue chain is Elongation factor 4 (608 aa).

Positions 11–193 (KKIRNFSIIA…QIVEKVPEPS (183 aa)) constitute a tr-type G domain. Residues 23 to 28 (DHGKST) and 140 to 143 (NKID) contribute to the GTP site.

The protein belongs to the TRAFAC class translation factor GTPase superfamily. Classic translation factor GTPase family. LepA subfamily.

The protein localises to the cell membrane. The enzyme catalyses GTP + H2O = GDP + phosphate + H(+). Required for accurate and efficient protein synthesis under certain stress conditions. May act as a fidelity factor of the translation reaction, by catalyzing a one-codon backward translocation of tRNAs on improperly translocated ribosomes. Back-translocation proceeds from a post-translocation (POST) complex to a pre-translocation (PRE) complex, thus giving elongation factor G a second chance to translocate the tRNAs correctly. Binds to ribosomes in a GTP-dependent manner. The polypeptide is Elongation factor 4 (Listeria welshimeri serovar 6b (strain ATCC 35897 / DSM 20650 / CCUG 15529 / CIP 8149 / NCTC 11857 / SLCC 5334 / V8)).